A 216-amino-acid polypeptide reads, in one-letter code: Somatotropin (216 aa).

The N-terminal stretch at 1–25 (MAPGSWFSPLLIAVVTLGLPQEAAA) is a signal peptide. Zn(2+) is bound at residue His-45. Residues Cys-78 and Cys-189 are joined by a disulfide bond. Glu-198 contacts Zn(2+). A disulfide bridge connects residues Cys-206 and Cys-214.

Belongs to the somatotropin/prolactin family.

Its subcellular location is the secreted. Functionally, growth hormone plays an important role in growth control. The chain is Somatotropin (GH) from Gallus gallus (Chicken).